The primary structure comprises 411 residues: Arginine deiminase (411 aa).

The Amidino-cysteine intermediate role is filled by cysteine 401.

It belongs to the arginine deiminase family. Glycosylated.

The protein resides in the cytoplasm. The catalysed reaction is L-arginine + H2O = L-citrulline + NH4(+). The protein operates within amino-acid degradation; L-arginine degradation via ADI pathway; carbamoyl phosphate from L-arginine: step 1/2. This Streptococcus pyogenes serotype M1 protein is Arginine deiminase (arcA).